The primary structure comprises 284 residues: L-ribulose-5-phosphate 3-epimerase UlaE (284 aa).

Belongs to the L-ribulose-5-phosphate 3-epimerase family.

The enzyme catalyses L-ribulose 5-phosphate = L-xylulose 5-phosphate. It participates in cofactor degradation; L-ascorbate degradation; D-xylulose 5-phosphate from L-ascorbate: step 3/4. Catalyzes the isomerization of L-xylulose-5-phosphate to L-ribulose-5-phosphate. Is involved in the anaerobic L-ascorbate utilization. In Escherichia coli O8 (strain IAI1), this protein is L-ribulose-5-phosphate 3-epimerase UlaE.